The following is a 356-amino-acid chain: Probable cinnamyl alcohol dehydrogenase (356 aa).

Cysteine 47 provides a ligand contact to Zn(2+). NADP(+) is bound at residue serine 49. Positions 69, 70, 100, 103, 106, 114, and 163 each coordinate Zn(2+). NADP(+) contacts are provided by residues threonine 167, 188–193 (GLGGVG), 211–216 (SSSDKK), threonine 251, glycine 275, and 298–300 (SFI).

The protein belongs to the zinc-containing alcohol dehydrogenase family. In terms of assembly, homodimer. Requires Zn(2+) as cofactor.

The enzyme catalyses (E)-cinnamyl alcohol + NADP(+) = (E)-cinnamaldehyde + NADPH + H(+). It catalyses the reaction (E)-coniferol + NADP(+) = (E)-coniferaldehyde + NADPH + H(+). It carries out the reaction (E)-sinapyl alcohol + NADP(+) = (E)-sinapaldehyde + NADPH + H(+). The catalysed reaction is (E)-4-coumaroyl alcohol + NADP(+) = (E)-4-coumaraldehyde + NADPH + H(+). The enzyme catalyses (E)-caffeyl alcohol + NADP(+) = (E)-caffeyl aldehyde + NADPH + H(+). Its pathway is aromatic compound metabolism; phenylpropanoid biosynthesis. Its function is as follows. Involved in lignin biosynthesis. Catalyzes the final step specific for the production of lignin monomers. Catalyzes the NADPH-dependent reduction of coniferaldehyde, 5-hydroxyconiferaldehyde, sinapaldehyde, 4-coumaraldehyde and caffeyl aldehyde to their respective alcohols. This chain is Probable cinnamyl alcohol dehydrogenase (CAD), found in Eucalyptus globulus (Tasmanian blue gum).